A 938-amino-acid polypeptide reads, in one-letter code: TFIIH basal transcription factor complex helicase/translocase XPB subunit (938 aa).

Residues 394–562 form the Helicase ATP-binding domain; that stretch reads FRSGNKAHQG…DLRHLVGPKL (169 aa). 407-414 serves as a coordination point for ATP; sequence LPCGAGKT. The DEVH box signature appears at 515–518; the sequence is DEVH. The 155-residue stretch at 627–781 folds into the Helicase C-terminal domain; that stretch reads WCTQALLEFH…SYRVLQSDMV (155 aa).

It belongs to the helicase family. RAD25/XPB subfamily. As to quaternary structure, component of the 7-subunit TFIIH core complex composed of XPB, XPD, SSL1, TFB1, TFB2, TFB4 and TFB5.

It catalyses the reaction Couples ATP hydrolysis with the unwinding of duplex DNA by translocating in the 3'-5' direction.. The catalysed reaction is ATP + H2O = ADP + phosphate + H(+). Its function is as follows. ATP-dependent 3'-5' DNA helicase/translocase; binds dsDNA rather than ssDNA, unzipping it in a translocase rather than classical helicase activity. Component of the general transcription factor IIH (TFIIH) core complex, involved in spliced leader RNA (SL RNA) gene transcription by RNA polymerase II. TFIIH has an essential role in transcription initiation. When the pre-initiation complex (PIC) has been established, TFIIH is required for promoter opening and promoter escape. The ATPase activity of XPB is required for promoter opening and promoter escape. The sequence is that of TFIIH basal transcription factor complex helicase/translocase XPB subunit from Trypanosoma brucei brucei (strain 927/4 GUTat10.1).